The chain runs to 552 residues: Formate--tetrahydrofolate ligase (552 aa).

Residue 62-69 (TPAGEGKS) participates in ATP binding.

It belongs to the formate--tetrahydrofolate ligase family.

The enzyme catalyses (6S)-5,6,7,8-tetrahydrofolate + formate + ATP = (6R)-10-formyltetrahydrofolate + ADP + phosphate. It participates in one-carbon metabolism; tetrahydrofolate interconversion. The protein is Formate--tetrahydrofolate ligase of Ligilactobacillus salivarius (strain UCC118) (Lactobacillus salivarius).